Consider the following 282-residue polypeptide: Osteoclast-associated immunoglobulin-like receptor (282 aa).

The N-terminal stretch at Met1–Thr18 is a signal peptide. Ig-like domains are found at residues Pro22–Ser116 and Glu126–Gly219. A glycan (N-linked (GlcNAc...) asparagine) is linked at Asn48. The cysteines at positions 53 and 100 are disulfide-linked. N-linked (GlcNAc...) asparagine glycosylation is present at Asn145. Positions Gly221–Val282 are disordered. Pro residues predominate over residues Pro273–Val282.

It belongs to the leukocyte receptor complex/polymeric immunoglobulin receptor (PIR/LRC) family.

The protein resides in the secreted. It is found in the cell membrane. Regulator of osteoclastogenesis which plays an important bone-specific function in osteoclast differentiation. The chain is Osteoclast-associated immunoglobulin-like receptor (OSCAR) from Homo sapiens (Human).